The primary structure comprises 379 residues: Retron Se72 reverse transcriptase (379 aa).

Residues 1–245 form the Reverse transcriptase domain; the sequence is MNKPRFNGTP…SKLSVTGLWV (245 aa). Positions 109, 188, and 189 each coordinate Mg(2+).

It belongs to the bacterial reverse transcriptase family.

It carries out the reaction DNA(n) + a 2'-deoxyribonucleoside 5'-triphosphate = DNA(n+1) + diphosphate. In terms of biological role, reverse transcriptase (RT) component of antiviral defense system retron Se72, composed of a non-coding RNA (ncRNA), this reverse transcriptase (RT) and the following cold shock-like protein. Expression of retron Se72 confers protection against bacteriophage lambda. At multiplicity of infection (MOI) of 0.02 cultures slow growth when infected with lambda but do not collapse, at MOI 2 cultures enter growth stasis. Responsible for synthesis of msDNA (a branched molecule with RNA linked by a 2',5'-phosphodiester bond to ssDNA). The retron transcript serves as primer (from a conserved internal G residue) and template for the reaction, and codes for the RT. The DNA segment is predicted to be 72 bases long. This chain is Retron Se72 reverse transcriptase, found in Salmonella heidelberg (strain 579083-10).